Reading from the N-terminus, the 370-residue chain is MSESPMFAANGMPKVNQGAEEDVRILGYDPLASPALLQVQIPATPTSLETAKRGRREAIDIITGKDDRVLVIVGPCSIHDLEAAQEYALRLKKLSDELKGDLSIIMRAYLEKPRTTVGWKGLINDPDVNNTFNINKGLQSARQLFVNLTNIGLPIGSEMLDTISPQYLADLVSFGAIGARTTESQLHRELASGLSFPVGFKNGTDGTLNVAVDACQAAAHSHHFMGVTKHGVAAITTTKGNEHCFVILRGGKKGTNYDAKSVAEAKAQLPAGSNGLMIDYSHGNSNKDFRNQPKVNDVVCEQIANGENAITGVMIESNINEGNQGIPAEGKAGLKYGVSITDACIGWETTEDVLRKLAAAVRQRREVNKK.

Ser-2 is modified (N-acetylserine).

The protein belongs to the class-I DAHP synthase family.

The catalysed reaction is D-erythrose 4-phosphate + phosphoenolpyruvate + H2O = 7-phospho-2-dehydro-3-deoxy-D-arabino-heptonate + phosphate. It functions in the pathway metabolic intermediate biosynthesis; chorismate biosynthesis; chorismate from D-erythrose 4-phosphate and phosphoenolpyruvate: step 1/7. With respect to regulation, inhibited by tyrosine. Functionally, stereospecific condensation of phosphoenolpyruvate (PEP) and D-erythrose-4-phosphate (E4P) giving rise to 3-deoxy-D-arabino-heptulosonate-7-phosphate (DAHP). In Saccharomyces cerevisiae (strain ATCC 204508 / S288c) (Baker's yeast), this protein is Phospho-2-dehydro-3-deoxyheptonate aldolase, tyrosine-inhibited (ARO4).